Reading from the N-terminus, the 508-residue chain is Photosystem II CP47 reaction center protein (508 aa).

The next 6 helical transmembrane spans lie at 21–36 (SVHI…WAGS), 101–115 (IVFS…IWHW), 140–156 (GIHL…FGAF), 203–218 (IAAG…FHLS), 237–252 (VLSS…AFVV), and 457–472 (SFAL…HGAR).

Belongs to the PsbB/PsbC family. PsbB subfamily. In terms of assembly, PSII is composed of 1 copy each of membrane proteins PsbA, PsbB, PsbC, PsbD, PsbE, PsbF, PsbH, PsbI, PsbJ, PsbK, PsbL, PsbM, PsbT, PsbX, PsbY, PsbZ, Psb30/Ycf12, at least 3 peripheral proteins of the oxygen-evolving complex and a large number of cofactors. It forms dimeric complexes. The cofactor is Binds multiple chlorophylls. PSII binds additional chlorophylls, carotenoids and specific lipids..

The protein resides in the plastid. It is found in the chloroplast thylakoid membrane. One of the components of the core complex of photosystem II (PSII). It binds chlorophyll and helps catalyze the primary light-induced photochemical processes of PSII. PSII is a light-driven water:plastoquinone oxidoreductase, using light energy to abstract electrons from H(2)O, generating O(2) and a proton gradient subsequently used for ATP formation. In Panax ginseng (Korean ginseng), this protein is Photosystem II CP47 reaction center protein.